Consider the following 557-residue polypeptide: Hdr-like menaquinol oxidoreductase iron-sulfur subunit (557 aa).

2 4Fe-4S ferredoxin-type domains span residues 86-115 (RAFK…GDPK) and 155-184 (KEWY…AEVV). Cys-95, Cys-98, Cys-101, Cys-105, Cys-164, Cys-167, Cys-170, and Cys-174 together coordinate [4Fe-4S] cluster.

The cofactor is [4Fe-4S] cluster.

Its subcellular location is the membrane. Has menaquinol-oxidizing activity. The HmeC and HmeD subunits may together mediate electron transfer from menaquinol to an unidentified electron acceptor on the cytoplasmic side of the membrane. This Archaeoglobus profundus (strain DSM 5631 / JCM 9629 / NBRC 100127 / Av18) protein is Hdr-like menaquinol oxidoreductase iron-sulfur subunit (hmeD).